Consider the following 371-residue polypeptide: tRNA-specific 2-thiouridylase MnmA (371 aa).

ATP is bound by residues 14–21 (GMSGGVDS) and M40. The segment at 100–102 (NPD) is interaction with target base in tRNA. The active-site Nucleophile is C105. Residues C105 and C201 are joined by a disulfide bond. Residue G129 participates in ATP binding. Residues 151–153 (KDQ) are interaction with tRNA. C201 serves as the catalytic Cysteine persulfide intermediate. The segment at 309–310 (RY) is interaction with tRNA.

The protein belongs to the MnmA/TRMU family.

It is found in the cytoplasm. The catalysed reaction is S-sulfanyl-L-cysteinyl-[protein] + uridine(34) in tRNA + AH2 + ATP = 2-thiouridine(34) in tRNA + L-cysteinyl-[protein] + A + AMP + diphosphate + H(+). Functionally, catalyzes the 2-thiolation of uridine at the wobble position (U34) of tRNA, leading to the formation of s(2)U34. This is tRNA-specific 2-thiouridylase MnmA from Halalkalibacterium halodurans (strain ATCC BAA-125 / DSM 18197 / FERM 7344 / JCM 9153 / C-125) (Bacillus halodurans).